A 1102-amino-acid polypeptide reads, in one-letter code: Carbamoyl phosphate synthase large chain (1102 aa).

The tract at residues 1–408 is carboxyphosphate synthetic domain; sequence MPKRTDIQSV…AFQKALRSLE (408 aa). 12 residues coordinate ATP: arginine 129, arginine 175, glycine 181, glycine 182, glutamate 214, isoleucine 216, glutamate 221, glycine 247, valine 248, histidine 249, glutamine 291, and glutamate 305. The ATP-grasp 1 domain maps to 137 to 334; sequence EEVRKKIGHG…IAKIAAKLAV (198 aa). Positions 291, 305, and 307 each coordinate Mg(2+). Mn(2+)-binding residues include glutamine 291, glutamate 305, and asparagine 307. The segment at 409–551 is oligomerization domain; the sequence is KKGSQFTFVG…YFYSSYDEES (143 aa). The interval 552 to 954 is carbamoyl phosphate synthetic domain; the sequence is EVAPREKPAV…AYAKSQAGAY (403 aa). The ATP-grasp 2 domain occupies 682-873; that stretch reads GRVLAEAGLP…LAKAAARISL (192 aa). 10 residues coordinate ATP: arginine 718, arginine 757, leucine 759, glutamate 764, glycine 789, isoleucine 790, histidine 791, serine 792, glutamine 832, and glutamate 844. 3 residues coordinate Mg(2+): glutamine 832, glutamate 844, and asparagine 846. Mn(2+) contacts are provided by glutamine 832, glutamate 844, and asparagine 846. Residues 955-1100 form the MGS-like domain; that stretch reads GPLPTKGRAF…QEHAAFLIAA (146 aa). The tract at residues 955 to 1102 is allosteric domain; that stretch reads GPLPTKGRAF…HAAFLIAARD (148 aa).

Belongs to the CarB family. As to quaternary structure, composed of two chains; the small (or glutamine) chain promotes the hydrolysis of glutamine to ammonia, which is used by the large (or ammonia) chain to synthesize carbamoyl phosphate. Tetramer of heterodimers (alpha,beta)4. The cofactor is Mg(2+). Mn(2+) is required as a cofactor.

The catalysed reaction is hydrogencarbonate + L-glutamine + 2 ATP + H2O = carbamoyl phosphate + L-glutamate + 2 ADP + phosphate + 2 H(+). It carries out the reaction hydrogencarbonate + NH4(+) + 2 ATP = carbamoyl phosphate + 2 ADP + phosphate + 2 H(+). Its pathway is amino-acid biosynthesis; L-arginine biosynthesis; carbamoyl phosphate from bicarbonate: step 1/1. It functions in the pathway pyrimidine metabolism; UMP biosynthesis via de novo pathway; (S)-dihydroorotate from bicarbonate: step 1/3. Its function is as follows. Large subunit of the glutamine-dependent carbamoyl phosphate synthetase (CPSase). CPSase catalyzes the formation of carbamoyl phosphate from the ammonia moiety of glutamine, carbonate, and phosphate donated by ATP, constituting the first step of 2 biosynthetic pathways, one leading to arginine and/or urea and the other to pyrimidine nucleotides. The large subunit (synthetase) binds the substrates ammonia (free or transferred from glutamine from the small subunit), hydrogencarbonate and ATP and carries out an ATP-coupled ligase reaction, activating hydrogencarbonate by forming carboxy phosphate which reacts with ammonia to form carbamoyl phosphate. The sequence is that of Carbamoyl phosphate synthase large chain from Streptomyces coelicolor (strain ATCC BAA-471 / A3(2) / M145).